An 89-amino-acid chain; its full sequence is Elongation factor 1-beta (89 aa).

The protein belongs to the EF-1-beta/EF-1-delta family.

In terms of biological role, promotes the exchange of GDP for GTP in EF-1-alpha/GDP, thus allowing the regeneration of EF-1-alpha/GTP that could then be used to form the ternary complex EF-1-alpha/GTP/AAtRNA. This chain is Elongation factor 1-beta (ef1b), found in Methanocaldococcus jannaschii (strain ATCC 43067 / DSM 2661 / JAL-1 / JCM 10045 / NBRC 100440) (Methanococcus jannaschii).